The chain runs to 41 residues: Chymotrypsin inhibitor (41 aa).

Its function is as follows. Inhibits chymotrypsin. This Eisenia hortensis (European nightcrawler) protein is Chymotrypsin inhibitor.